The following is a 112-amino-acid chain: Prothymosin alpha-B (112 aa).

The segment at 1 to 112 (MSDTAVDASV…TKKQKTDEDD (112 aa)) is disordered. The span at 9-35 (SVEKSTKDLKAKEKEVVEEAENGKDKP) shows a compositional bias: basic and acidic residues. Composition is skewed to acidic residues over residues 41–83 (ENEE…DEVE) and 92–101 (EDDEDDDDDV). Basic and acidic residues predominate over residues 102–112 (ETKKQKTDEDD).

This sequence belongs to the pro/parathymosin family.

Its subcellular location is the nucleus. This chain is Prothymosin alpha-B (ptma-b), found in Xenopus laevis (African clawed frog).